The chain runs to 187 residues: MVRPLNCIVAVSQNMGIGKNGDLPWPPLRNEFQYFQRMTTVSSVEGKQNLVIMGRKTWFSIPEKNRPLKDRINIVLSRELKEPPKGAHFLAKSLDDALELIEDPELTNKVDVVWIVGGSSVYKEAMNKPGHVRLFVTRIMQEFESDAFFPEIDFEKYKLLPEYPGVPLDVQEEKGIKYKFEVYEKNN.

One can recognise a DHFR domain in the interval 4-185; it reads PLNCIVAVSQ…IKYKFEVYEK (182 aa). NADP(+)-binding positions include alanine 10 and 16–22; that span reads GIGKNGD. 31–36 contributes to the substrate binding site; sequence EFQYFQ. 55–57 is a binding site for NADP(+); the sequence is RKT. Residue arginine 71 coordinates substrate. NADP(+) contacts are provided by residues 77-79 and 117-124; these read SRE and GGSSVYKE.

Belongs to the dihydrofolate reductase family. As to quaternary structure, homodimer.

It is found in the mitochondrion. It localises to the cytoplasm. The catalysed reaction is (6S)-5,6,7,8-tetrahydrofolate + NADP(+) = 7,8-dihydrofolate + NADPH + H(+). It participates in cofactor biosynthesis; tetrahydrofolate biosynthesis; 5,6,7,8-tetrahydrofolate from 7,8-dihydrofolate: step 1/1. Functionally, key enzyme in folate metabolism. Contributes to the de novo mitochondrial thymidylate biosynthesis pathway. Catalyzes an essential reaction for de novo glycine and purine synthesis, and for DNA precursor synthesis. Binds its own mRNA and that of DHFR2. The polypeptide is Dihydrofolate reductase (DHFR) (Bos taurus (Bovine)).